Reading from the N-terminus, the 1174-residue chain is Probable pyruvate-flavodoxin oxidoreductase (1174 aa).

4Fe-4S ferredoxin-type domains are found at residues 680–709 (EIPI…AKVV) and 736–765 (YVLQ…NPEI). [4Fe-4S] cluster-binding residues include cysteine 689, cysteine 692, cysteine 695, cysteine 699, cysteine 745, cysteine 748, cysteine 751, cysteine 755, cysteine 819, cysteine 822, cysteine 847, and cysteine 1071.

This sequence belongs to the pyruvate:ferredoxin/flavodoxin oxidoreductase family. [4Fe-4S] cluster is required as a cofactor.

The enzyme catalyses oxidized [flavodoxin] + pyruvate + CoA + 2 H(+) = reduced [flavodoxin] + acetyl-CoA + CO2. Functionally, oxidoreductase required for the transfer of electrons from pyruvate to flavodoxin. The chain is Probable pyruvate-flavodoxin oxidoreductase (ydbK) from Escherichia coli (strain K12).